Here is a 45-residue protein sequence, read N- to C-terminus: Ice-structuring protein SS-8 (45 aa).

Met1 carries the blocked amino end (Met) modification. Repeats lie at residues 9–21, 22–33, and 34–45; these read KAARLAAAAALAA, KTAADAAAKAAA, and KAAAIAAAAASA.

Belongs to the type-I AFP family.

Antifreeze proteins lower the blood freezing point. The chain is Ice-structuring protein SS-8 from Myoxocephalus scorpius (Shorthorn sculpin).